Reading from the N-terminus, the 90-residue chain is Keratin-associated protein 19-1 (90 aa).

The interval 5-84 (GSYYGGLGYS…CCRPSYNGGY (80 aa)) is 26 X 2 AA repeats of G-[YCGS].

Belongs to the KRTAP type 19 family. Interacts with hair keratins. As to expression, detected in the upper portion of the hair cortex.

Functionally, in the hair cortex, hair keratin intermediate filaments are embedded in an interfilamentous matrix, consisting of hair keratin-associated proteins (KRTAP), which are essential for the formation of a rigid and resistant hair shaft through their extensive disulfide bond cross-linking with abundant cysteine residues of hair keratins. The matrix proteins include the high-sulfur and high-glycine-tyrosine keratins. The protein is Keratin-associated protein 19-1 (KRTAP19-1) of Homo sapiens (Human).